The chain runs to 303 residues: Probable 5-dehydro-4-deoxyglucarate dehydratase (303 aa).

The protein belongs to the DapA family.

The enzyme catalyses 5-dehydro-4-deoxy-D-glucarate + H(+) = 2,5-dioxopentanoate + CO2 + H2O. The protein operates within carbohydrate acid metabolism; D-glucarate degradation; 2,5-dioxopentanoate from D-glucarate: step 2/2. In Ectopseudomonas mendocina (strain ymp) (Pseudomonas mendocina), this protein is Probable 5-dehydro-4-deoxyglucarate dehydratase.